We begin with the raw amino-acid sequence, 344 residues long: tRNA-specific 2-thiouridylase MnmA (344 aa).

Residues 9-16 (AMSGGVDS) and M34 contribute to the ATP site. C92 functions as the Nucleophile in the catalytic mechanism. C92 and C188 form a disulfide bridge. ATP is bound at residue G116. Positions 138 to 140 (KDQ) are interaction with tRNA. The active-site Cysteine persulfide intermediate is C188.

This sequence belongs to the MnmA/TRMU family.

Its subcellular location is the cytoplasm. It carries out the reaction S-sulfanyl-L-cysteinyl-[protein] + uridine(34) in tRNA + AH2 + ATP = 2-thiouridine(34) in tRNA + L-cysteinyl-[protein] + A + AMP + diphosphate + H(+). Functionally, catalyzes the 2-thiolation of uridine at the wobble position (U34) of tRNA, leading to the formation of s(2)U34. This chain is tRNA-specific 2-thiouridylase MnmA, found in Desulfotalea psychrophila (strain LSv54 / DSM 12343).